The following is a 205-amino-acid chain: Holliday junction branch migration complex subunit RuvA (205 aa).

The interval 1–65 (MIAKLKGILD…EDRIHLFGFL (65 aa)) is domain I. The interval 66–144 (DNTEKVAFNM…NINTIANNTS (79 aa)) is domain II. Positions 145–153 (LAILSTDSN) are flexible linker. The segment at 154-205 (THDNILSDAITALIALGISRAEATQILSDIYALFPSISVNELVRTALQRRAK) is domain III.

Belongs to the RuvA family. In terms of assembly, homotetramer. Forms an RuvA(8)-RuvB(12)-Holliday junction (HJ) complex. HJ DNA is sandwiched between 2 RuvA tetramers; dsDNA enters through RuvA and exits via RuvB. An RuvB hexamer assembles on each DNA strand where it exits the tetramer. Each RuvB hexamer is contacted by two RuvA subunits (via domain III) on 2 adjacent RuvB subunits; this complex drives branch migration. In the full resolvosome a probable DNA-RuvA(4)-RuvB(12)-RuvC(2) complex forms which resolves the HJ.

It localises to the cytoplasm. Its function is as follows. The RuvA-RuvB-RuvC complex processes Holliday junction (HJ) DNA during genetic recombination and DNA repair, while the RuvA-RuvB complex plays an important role in the rescue of blocked DNA replication forks via replication fork reversal (RFR). RuvA specifically binds to HJ cruciform DNA, conferring on it an open structure. The RuvB hexamer acts as an ATP-dependent pump, pulling dsDNA into and through the RuvAB complex. HJ branch migration allows RuvC to scan DNA until it finds its consensus sequence, where it cleaves and resolves the cruciform DNA. This chain is Holliday junction branch migration complex subunit RuvA, found in Orientia tsutsugamushi (strain Boryong) (Rickettsia tsutsugamushi).